Consider the following 38-residue polypeptide: Photosystem II reaction center protein X (38 aa).

A helical membrane pass occupies residues 8–28 (FLWSLVAGAVVLGALFGAIIF).

Belongs to the PsbX family. Type 1 subfamily. As to quaternary structure, PSII is composed of 1 copy each of membrane proteins PsbA, PsbB, PsbC, PsbD, PsbE, PsbF, PsbH, PsbI, PsbJ, PsbK, PsbL, PsbM, PsbT, PsbX, PsbY, PsbZ, Psb30/Ycf12, peripheral proteins PsbO, CyanoQ (PsbQ), PsbU, PsbV and a large number of cofactors. It forms dimeric complexes.

It is found in the cellular thylakoid membrane. Functionally, involved in the binding and/or turnover of quinones at the Q(B) site of photosystem II (PSII). PSII is a light-driven water plastoquinone oxidoreductase, using light energy to abstract electrons from H(2)O, generating a proton gradient subsequently used for ATP formation. This is Photosystem II reaction center protein X from Synechococcus sp. (strain JA-2-3B'a(2-13)) (Cyanobacteria bacterium Yellowstone B-Prime).